The sequence spans 408 residues: Arginine biosynthesis bifunctional protein ArgJ (408 aa).

Positions 158, 184, 195, 281, 403, and 408 each coordinate substrate. Threonine 195 (nucleophile) is an active-site residue.

The protein belongs to the ArgJ family. Heterotetramer of two alpha and two beta chains.

Its subcellular location is the cytoplasm. The enzyme catalyses N(2)-acetyl-L-ornithine + L-glutamate = N-acetyl-L-glutamate + L-ornithine. It carries out the reaction L-glutamate + acetyl-CoA = N-acetyl-L-glutamate + CoA + H(+). The protein operates within amino-acid biosynthesis; L-arginine biosynthesis; L-ornithine and N-acetyl-L-glutamate from L-glutamate and N(2)-acetyl-L-ornithine (cyclic): step 1/1. It participates in amino-acid biosynthesis; L-arginine biosynthesis; N(2)-acetyl-L-ornithine from L-glutamate: step 1/4. Catalyzes two activities which are involved in the cyclic version of arginine biosynthesis: the synthesis of N-acetylglutamate from glutamate and acetyl-CoA as the acetyl donor, and of ornithine by transacetylation between N(2)-acetylornithine and glutamate. The sequence is that of Arginine biosynthesis bifunctional protein ArgJ from Bacillus cereus (strain ZK / E33L).